The sequence spans 451 residues: UPF0761 membrane protein Hhal_0704 (451 aa).

6 helical membrane-spanning segments follow: residues 66–86 (LLAIVPLMTIGFSVLAAFPVF), 122–142 (ELTAVGIAGLTVTALLLLNTI), 162–182 (FMVYWTVLTMGPLLLGVSVAS), 204–224 (LLNLAPFVVQAIVFSLIYSLV), 228–248 (SVPVLHAVIGGVVASGLFELA), and 268–288 (ALAALPIFLVWLYISWLVILI).

It belongs to the UPF0761 family.

Its subcellular location is the cell inner membrane. This is UPF0761 membrane protein Hhal_0704 from Halorhodospira halophila (strain DSM 244 / SL1) (Ectothiorhodospira halophila (strain DSM 244 / SL1)).